The primary structure comprises 629 residues: Coiled-coil domain-containing protein 93 (629 aa).

The tract at residues 1-23 is disordered; the sequence is MGLPKGPEGQGLPEVETREDEEQ. A sufficient for interaction with CCDC22 region spans residues 1 to 428; that stretch reads MGLPKGPEGQ…ETLKAERAPG (428 aa). 2 coiled-coil regions span residues 231 to 430 and 558 to 599; these read LSAA…PGEK and LRQM…LLEK. Phosphoserine is present on residues Ser-298, Ser-301, and Ser-305. The sufficient for interaction with WASHC2C stretch occupies residues 446-629; sequence THNEDLDRRY…LLSKIKAKAS (184 aa).

This sequence belongs to the CCDC93 family. As to quaternary structure, component of the commander complex consisting of the CCC subcomplex and the retriever subcomplex. Component of the CCC (COMMD/CCDC22/CCDC93) subcomplex consisting of COMMD1, COMMD2, COMMD3, COMMD4, COMMD5, COMMD6, COMMD7, COMMD8, COMMD9, COMMD10, CCDC22 and CCDC93. Forms a coiled-coil heterodimer with CCDC22; this heterodimer interacts with the guanine nucleotide exchange factor DENND10; the interaction is direct. Interacts with WASHC1. Interacts directly with WASHC2C. Interacts with SNX17 and SNX31.

The protein resides in the early endosome. Its function is as follows. Component of the commander complex that is essential for endosomal recycling of transmembrane cargos; the commander complex is composed of composed of the CCC subcomplex and the retriever subcomplex. Component of the CCC complex, which is involved in the regulation of endosomal recycling of surface proteins, including integrins, signaling receptor and channels. The CCC complex associates with SNX17, retriever and WASH complexes to prevent lysosomal degradation and promote cell surface recycling of numerous cargos such as integrins ITGA5:ITGB1. Involved in copper-dependent ATP7A trafficking between the trans-Golgi network and vesicles in the cell periphery; the function is proposed to depend on its association within the CCC complex and cooperation with the WASH complex on early endosomes and is dependent on its interaction with WASHC2C. This Mus musculus (Mouse) protein is Coiled-coil domain-containing protein 93 (Ccdc93).